The following is a 174-amino-acid chain: Co-chaperone protein HscB homolog (174 aa).

A J domain is found at 2-74 (NYFELFKFSP…IRRAEHMLSL (73 aa)).

The protein belongs to the HscB family. Interacts with HscA and stimulates its ATPase activity.

Its function is as follows. Co-chaperone involved in the maturation of iron-sulfur cluster-containing proteins. Seems to help targeting proteins to be folded toward HscA. In Shewanella sp. (strain MR-4), this protein is Co-chaperone protein HscB homolog.